Here is a 543-residue protein sequence, read N- to C-terminus: Chaperonin GroEL (543 aa).

ATP-binding positions include 30–33 (TLGP), Lys-51, 87–91 (DGTTT), Gly-415, 480–482 (NAL), and Asp-496.

It belongs to the chaperonin (HSP60) family. Forms a cylinder of 14 subunits composed of two heptameric rings stacked back-to-back. Interacts with the co-chaperonin GroES.

Its subcellular location is the cytoplasm. It catalyses the reaction ATP + H2O + a folded polypeptide = ADP + phosphate + an unfolded polypeptide.. In terms of biological role, together with its co-chaperonin GroES, plays an essential role in assisting protein folding. The GroEL-GroES system forms a nano-cage that allows encapsulation of the non-native substrate proteins and provides a physical environment optimized to promote and accelerate protein folding. In Gemmatimonas aurantiaca (strain DSM 14586 / JCM 11422 / NBRC 100505 / T-27), this protein is Chaperonin GroEL.